Here is a 639-residue protein sequence, read N- to C-terminus: Immunoglobulin-like domain-containing receptor 2 (639 aa).

The N-terminal stretch at Met-1 to Gly-20 is a signal peptide. An Ig-like V-type domain is found at Leu-21–Glu-162. The Lumenal portion of the chain corresponds to Leu-21 to Glu-186. An intrachain disulfide couples Cys-42 to Cys-145. A helical membrane pass occupies residues Trp-187–Cys-207. Residues Trp-208 to Val-639 lie on the Cytoplasmic side of the membrane. Disordered regions lie at residues Leu-273–Arg-295, Trp-374–Arg-415, and Tyr-437–Val-639. Basic and acidic residues-rich tracts occupy residues Tyr-393–Ser-414 and Arg-442–Ala-464. Ser-473 carries the phosphoserine modification. Residues Arg-483–Arg-493 are compositionally biased toward basic and acidic residues. The residue at position 544 (Arg-544) is an Omega-N-methylarginine. Phosphoserine is present on Ser-579. A compositionally biased stretch (basic and acidic residues) spans Arg-606–Glu-617.

It belongs to the immunoglobulin superfamily. LISCH7 family. In terms of assembly, interacts with MARVELD2 and OCLN. Interacts with P4HB AND HSPA5; the interaction with HSPA5 stabilizes ILDR2 expression. Interacts (via C-terminus) with TRA2A, TRA2B and SRSF1. In terms of tissue distribution, expressed in testis, brain, pituitary, colon, heart, nerves, prostate, esophagus, lung liver and small intestine. Highly expressed in macrophages, also expressed in monocytes and at low levels in NK and NKT cells (at protein level).

The protein localises to the endoplasmic reticulum membrane. Its subcellular location is the cell junction. It localises to the tight junction. It is found in the nucleus. May be involved in ER stress pathways with effects on lipid homeostasis and insulin secretion. With ILDR1 and LSR, involved in the maintain of the epithelial barrier function through the recruitment of MARVELD2/tricellulin to tricellular tight junctions. Also functions as a B7-like protein family member expressed on immune cells and inflamed tissue and with T-cell inhibitory activity. In the inner ear, may regulate alternative pre-mRNA splicing via binding to TRA2A, TRA2B and SRSF1. This chain is Immunoglobulin-like domain-containing receptor 2, found in Homo sapiens (Human).